Here is a 427-residue protein sequence, read N- to C-terminus: Serine--tRNA ligase (427 aa).

230 to 232 contributes to the L-serine binding site; it reads TAE. ATP is bound at residue 261–263; it reads RAE. L-serine is bound at residue Glu-284. An ATP-binding site is contributed by 348 to 351; sequence EISS. L-serine is bound at residue Ser-384.

The protein belongs to the class-II aminoacyl-tRNA synthetase family. Type-1 seryl-tRNA synthetase subfamily. As to quaternary structure, homodimer. The tRNA molecule binds across the dimer.

Its subcellular location is the cytoplasm. It carries out the reaction tRNA(Ser) + L-serine + ATP = L-seryl-tRNA(Ser) + AMP + diphosphate + H(+). It catalyses the reaction tRNA(Sec) + L-serine + ATP = L-seryl-tRNA(Sec) + AMP + diphosphate + H(+). It participates in aminoacyl-tRNA biosynthesis; selenocysteinyl-tRNA(Sec) biosynthesis; L-seryl-tRNA(Sec) from L-serine and tRNA(Sec): step 1/1. In terms of biological role, catalyzes the attachment of serine to tRNA(Ser). Is also able to aminoacylate tRNA(Sec) with serine, to form the misacylated tRNA L-seryl-tRNA(Sec), which will be further converted into selenocysteinyl-tRNA(Sec). The protein is Serine--tRNA ligase of Moorella thermoacetica (strain ATCC 39073 / JCM 9320).